The sequence spans 514 residues: Alpha-amylase (514 aa).

A signal peptide spans 1-31 (MIQKRKRTVSFRLVLMCTLLFVSLPITKTSA). Positions 133, 190, 212, 214, 225, 231, 233, and 235 each coordinate Ca(2+). Asp-190 contacts Na(+). Residues Asp-214, Asp-225, and Asp-231 each contribute to the Na(+) site. Residue Asp-262 is the Nucleophile of the active site. His-266 provides a ligand contact to Ca(2+). The active-site Proton donor is Glu-292. Residues Gly-331, Asp-438, and Asp-461 each contribute to the Ca(2+) site.

The protein belongs to the glycosyl hydrolase 13 family. As to quaternary structure, monomer. Ca(2+) serves as cofactor. It depends on Na(+) as a cofactor.

It is found in the secreted. The enzyme catalyses Endohydrolysis of (1-&gt;4)-alpha-D-glucosidic linkages in polysaccharides containing three or more (1-&gt;4)-alpha-linked D-glucose units.. The protein is Alpha-amylase of Bacillus amyloliquefaciens (Bacillus velezensis).